Reading from the N-terminus, the 244-residue chain is Extracellular superoxide dismutase [Cu-Zn] (244 aa).

A signal peptide spans 1–18 (MLALVCSCLLLAALPADT). Cystine bridges form between Cys-67/Cys-212 and Cys-129/Cys-211. An N-linked (GlcNAc...) asparagine glycan is attached at Asn-111. 3 residues coordinate Cu cation: His-118, His-120, and His-135. Zn(2+)-binding residues include His-135, His-143, His-146, and Asp-149. Position 185 (His-185) interacts with Cu cation. The disordered stretch occupies residues 221-244 (PWARQAQEHAERKKRRRESECKAA). Residues 226–244 (AQEHAERKKRRRESECKAA) are compositionally biased toward basic and acidic residues.

This sequence belongs to the Cu-Zn superoxide dismutase family. As to quaternary structure, homotetramer. Directly interacts with ATP7A; this interaction is copper-dependent and is required for SOD3 activity. Cu cation is required as a cofactor. Requires Zn(2+) as cofactor.

It localises to the secreted. Its subcellular location is the extracellular space. It is found in the golgi apparatus. The protein resides in the trans-Golgi network. It catalyses the reaction 2 superoxide + 2 H(+) = H2O2 + O2. In terms of biological role, protect the extracellular space from toxic effect of reactive oxygen intermediates by converting superoxide radicals into hydrogen peroxide and oxygen. The sequence is that of Extracellular superoxide dismutase [Cu-Zn] (SOD3) from Oryctolagus cuniculus (Rabbit).